Here is a 573-residue protein sequence, read N- to C-terminus: 60 kDa lysophospholipase (573 aa).

The region spanning 9-355 (RRLLAVYTGG…DVRKELLTKD (347 aa)) is the Asparaginase/glutaminase domain. The active-site Acyl-ester intermediate is Thr-19. The interval 41–350 (TLPMFHDEEH…PGLSLDVRKE (310 aa)) is asparaginase. Substrate is bound by residues 84 to 86 (DSS) and 116 to 117 (TD). ANK repeat units lie at residues 141–170 (GAQV…YVIP), 399–429 (ALVP…DLGL), 433–462 (NGQT…DVNT), 466–495 (DGFS…SLST), and 533–562 (DGHS…AVGA).

The protein in the N-terminal section; belongs to the asparaginase 1 family. As to quaternary structure, monomer.

The enzyme catalyses a 1-acyl-sn-glycero-3-phosphocholine + H2O = sn-glycerol 3-phosphocholine + a fatty acid + H(+). The catalysed reaction is L-asparagine + H2O = L-aspartate + NH4(+). It carries out the reaction a 1-O-alkyl-2-acetyl-sn-glycero-3-phosphocholine + H2O = a 1-O-alkyl-sn-glycero-3-phosphocholine + acetate + H(+). It catalyses the reaction 1-hexadecanoyl-sn-glycero-3-phosphocholine + H2O = sn-glycerol 3-phosphocholine + hexadecanoate + H(+). The enzyme catalyses 2 1-hexadecanoyl-sn-glycero-3-phosphocholine = 1,2-dihexadecanoyl-sn-glycero-3-phosphocholine + sn-glycerol 3-phosphocholine. The catalysed reaction is 1-octadecanoyl-sn-glycero-3-phosphocholine + H2O = octadecanoate + sn-glycerol 3-phosphocholine + H(+). It carries out the reaction 1-(9Z-octadecenoyl)-sn-glycero-3-phosphocholine + H2O = sn-glycerol 3-phosphocholine + (9Z)-octadecenoate + H(+). It catalyses the reaction 1-hexadecanoyl-sn-glycero-3-phosphoethanolamine + H2O = sn-glycero-3-phosphoethanolamine + hexadecanoate + H(+). The enzyme catalyses 1-(9Z-octadecenoyl)-sn-glycero-3-phosphoethanolamine + H2O = sn-glycero-3-phosphoethanolamine + (9Z)-octadecenoate + H(+). The catalysed reaction is 1-hexadecanoyl-sn-glycero-3-phosphoethanolamine + 1-hexadecanoyl-sn-glycero-3-phosphocholine = 1,2-dihexadecanoyl-sn-glycero-3-phosphoethanolamine + sn-glycerol 3-phosphocholine. It carries out the reaction 2-(5Z,8Z,11Z,14Z)-eicosatetraenoyl-sn-glycero-3-phosphocholine + H2O = sn-glycerol 3-phosphocholine + (5Z,8Z,11Z,14Z)-eicosatetraenoate + H(+). It catalyses the reaction 2-hexadecanoyl-sn-glycero-3-phosphocholine + H2O = sn-glycerol 3-phosphocholine + hexadecanoate + H(+). The enzyme catalyses 2 2-hexadecanoyl-sn-glycero-3-phosphocholine = 1,2-dihexadecanoyl-sn-glycero-3-phosphocholine + sn-glycerol 3-phosphocholine. The catalysed reaction is 1-O-(9Z)-octadecenoyl-2-O-acetyl-sn-glycero-3-phosphocholine + H2O = 2-acetyl-sn-glycero-3-phosphocholine + (9Z)-octadecenoate + H(+). It carries out the reaction a 1-acyl-sn-glycero-3-phospho-(1D-myo-inositol) + 1-hexadecanoyl-sn-glycero-3-phosphocholine = a 1-acyl-2-hexadecanoyl-sn-glycero-3-phospho-(1D-myo-inositol) + sn-glycerol 3-phosphocholine. It catalyses the reaction 2 2-(5Z,8Z,11Z,14Z)-eicosatetraenoyl-sn-glycero-3-phosphocholine = 1,2-di-(5Z,8Z,11Z,14Z-eicosatetraenoyl)-sn-glycero-3-phosphocholine + sn-glycerol 3-phosphocholine. Functionally, exhibits lysophospholipase, transacylase, PAF acetylhydrolase and asparaginase activities. Can catalyze three types of transacylation reactions: (1) acyl transfer from 1-acyl-sn-glycero-3-phosphocholine (1-acyl-GPC) to the sn-1(3) positions of glycerol and 2-acylglycerol (sn-1 to -1(3) transfer), (2) acyl transfer from 1-acyl-GPC to the sn-2 positions of 1-acyl-GPC, 1-acyl-sn-glycero-3-phosphoethanolamine (1-acyl-GPE), and other lysophospholipids (sn-1 to -2 transfer) and (3) acyl transfer from 2-acyl-GPC to the sn-1 position of 2-acyl-GPC and 2-acyl-GPE (sn-2 to -1 transfer). Mediates the synthesis of 1-arachidonoyl species of phospholipids by transferring the arachidonoyl residue from 2-arachidonoyl lysophospholipid to the sn-1 position of 2-acyl lysophospholipid. In Homo sapiens (Human), this protein is 60 kDa lysophospholipase (ASPG).